The sequence spans 94 residues: Small ubiquitin-related modifier 3 (94 aa).

Lys-11 participates in a covalent cross-link: Glycyl lysine isopeptide (Lys-Gly) (interchain with G-Cter in SUMO). Residues 15–92 (DHINLKVAGQ…IDVFQQQTGG (78 aa)) form the Ubiquitin-like domain. Gly-92 is covalently cross-linked (Glycyl lysine isopeptide (Gly-Lys) (interchain with K-? in acceptor proteins)). A propeptide spanning residues 93-94 (SC) is cleaved from the precursor.

This sequence belongs to the ubiquitin family. SUMO subfamily. Interacts with sae2 and ube2i. Covalently attached to a number of proteins. In terms of processing, polymeric chains can be formed through Lys-11 cross-linking. Post-translationally, cleavage of precursor form by a sentrin-specific protease is necessary for function.

The protein resides in the cytoplasm. It localises to the nucleus. The protein localises to the PML body. Its function is as follows. Ubiquitin-like protein which can be covalently attached to target lysines either as a monomer or as a lysine-linked polymer. Does not seem to be involved in protein degradation and may function as an antagonist of ubiquitin in the degradation process. Plays a role in a number of cellular processes such as nuclear transport, DNA replication and repair, mitosis and signal transduction. Covalent attachment to its substrates requires prior activation by the E1 complex sae1-sae2 and linkage to the E2 enzyme ube2i. The sequence is that of Small ubiquitin-related modifier 3 (sumo3) from Danio rerio (Zebrafish).